The sequence spans 921 residues: MADYHFGEVENKWQSKWNAEKTFKALENSSKPKYFVLDMFPYPSGSGLHVGHPLGYIASDIMARYKRIKGYNVLHPMGFDSFGLPAEQYAVQTGQHPAITTEQNIARYIEQLNKIGFSFDWDREIRTSDPAYYKWTQWIFIQLFNHWYNKASDKAEPITNLVKQFETAGNAGINAACDEDAVTFTAADWKSYSEKQQSDTLLKYRLTYLSETMVNWCPGLGTVLANEEVKDGLSERGGFPVERKKMKQWSMRITAYADRLLKGLDTIDWPEAMKEMQRYWIGKSLGAMLTFKVVDKDMELTVFTTRIDTTFGVTYVSIAPEHEWIGALTSPEQKAAVEEYVTKAKNRSERDRMSDVKTVSGCFTGSYVTNPFNNEKIPVWIADYVLAGYGTGVVMAVPSSDERDYKFASFYKLPIISVQEGAHTDITKEDFDPKAGTMINSGFLNGLTVKQAIPEAIKFIEEKKIGFAKINFKMRDSIFGRQRYWGEPIPVSYKNDIPYVLNESELPLALPAIDEYKPTETGEPPLARNKAFADKGYELSTMPGWAGSSWYFMRYMDPQNKTAVAAADKINYWGQVDLYMGGAEHATGHLLYSRFWNKFLFDMGITPNDEPFAKLINQGMIQGVSKFAYRINGTNKFVSAGLKKEYDTTPIHVDVSIVHNDVLDTEAFKKWRPDFASAEFILENNTYVCGSEVEKMSKSKFNVVNPDDIVNKYGADTLRMYEMFLGPLEQSKPWNTNGIEGVYKFLNRFWRLFHDTAGNFAVSDAQPTAEELKVLHKTLKRVEEDIERFSFNTPVSTFMICVNELGSLKCNKRTILEPLTIALSPLAPHIAEELWSLLGHTTSVSTATYPAWDEKFLVESNHEYPISINGKMRAKLNLPVDMPAAEVEQQVLANEVVQKWLEGKAPKKIIVIPNKIVNVVM.

The 'HIGH' region signature appears at 41-52; the sequence is PYPSGSGLHVGH. The 'KMSKS' region motif lies at 695–699; the sequence is KMSKS. K698 lines the ATP pocket.

The protein belongs to the class-I aminoacyl-tRNA synthetase family.

Its subcellular location is the cytoplasm. The catalysed reaction is tRNA(Leu) + L-leucine + ATP = L-leucyl-tRNA(Leu) + AMP + diphosphate. The chain is Leucine--tRNA ligase from Cytophaga hutchinsonii (strain ATCC 33406 / DSM 1761 / CIP 103989 / NBRC 15051 / NCIMB 9469 / D465).